Here is a 196-residue protein sequence, read N- to C-terminus: ATP-dependent Clp protease proteolytic subunit (196 aa).

Ser101 acts as the Nucleophile in catalysis. Residue His126 is part of the active site.

The protein belongs to the peptidase S14 family. As to quaternary structure, component of the chloroplastic Clp protease core complex.

It is found in the plastid. It localises to the chloroplast stroma. The catalysed reaction is Hydrolysis of proteins to small peptides in the presence of ATP and magnesium. alpha-casein is the usual test substrate. In the absence of ATP, only oligopeptides shorter than five residues are hydrolyzed (such as succinyl-Leu-Tyr-|-NHMec, and Leu-Tyr-Leu-|-Tyr-Trp, in which cleavage of the -Tyr-|-Leu- and -Tyr-|-Trp bonds also occurs).. Functionally, cleaves peptides in various proteins in a process that requires ATP hydrolysis. Has a chymotrypsin-like activity. Plays a major role in the degradation of misfolded proteins. The protein is ATP-dependent Clp protease proteolytic subunit of Coffea arabica (Arabian coffee).